Consider the following 788-residue polypeptide: Protein FAR1-RELATED SEQUENCE 5 (788 aa).

The FAR1 domain occupies 87–179 (AFYNSYARRI…VKDHNHELVP (93 aa)). The MULE domain occupies 299-395 (TVTFDTTYRS…CKWHILKKCQ (97 aa)). The SWIM-type zinc finger occupies 584-616 (FNVLEMRANCSCQMFEFSGIICRHILAVFRVTN). The segment at 713–733 (SSVTGGKHQQEVLAQPEPEDE) is disordered. Residues 731–768 (EDEMDKKINQLRNELELANRKCEAYRTNLLSVLKEMED) are a coiled coil.

The protein belongs to the FHY3/FAR1 family. Expressed in hypocotyls, rosette and cauline leaves, inflorescences stems, flowers and siliques.

The protein localises to the nucleus. Putative transcription activator involved in regulating light control of development. This Arabidopsis thaliana (Mouse-ear cress) protein is Protein FAR1-RELATED SEQUENCE 5 (FRS5).